A 585-amino-acid polypeptide reads, in one-letter code: Lipoprotein LpqB (585 aa).

The first 17 residues, 1–17 (MGRKLLGLLMLAVLLAG), serve as a signal peptide directing secretion. Cys18 carries N-palmitoyl cysteine lipidation. The S-diacylglycerol cysteine moiety is linked to residue Cys18. Disordered stretches follow at residues 24–48 (SSAP…TPGM) and 560–585 (PSAD…VLPG).

This sequence belongs to the LpqB lipoprotein family.

It is found in the cell membrane. This chain is Lipoprotein LpqB, found in Mycolicibacterium paratuberculosis (strain ATCC BAA-968 / K-10) (Mycobacterium paratuberculosis).